A 375-amino-acid polypeptide reads, in one-letter code: Outer membrane porin OmpD (375 aa).

A signal peptide spans 1–34; sequence MRKHAKKIIRIIKMKLKLVAVAVTSLLAAGVVNA.

It belongs to the Gram-negative porin family. Homotrimer. Mixed heterotrimers with other porins are also probable.

The protein resides in the cell outer membrane. Functionally, forms pores that allow passive diffusion of small molecules across the outer membrane. The polypeptide is Outer membrane porin OmpD (Salmonella typhimurium (strain SL1344)).